Consider the following 226-residue polypeptide: Putative 5'-nucleotidase alr3139 (226 aa).

A divalent metal cation is bound by residues Asp-8, Asp-9, Ser-38, and Asn-89.

Belongs to the SurE nucleotidase family. The cofactor is a divalent metal cation.

Its subcellular location is the cytoplasm. It carries out the reaction a ribonucleoside 5'-phosphate + H2O = a ribonucleoside + phosphate. Functionally, nucleotidase that shows phosphatase activity on nucleoside 5'-monophosphates. This Nostoc sp. (strain PCC 7120 / SAG 25.82 / UTEX 2576) protein is Putative 5'-nucleotidase alr3139.